We begin with the raw amino-acid sequence, 175 residues long: Hypoxanthine-guanine phosphoribosyltransferase (175 aa).

Diphosphate contacts are provided by Lys40 and Gly41. Residues Glu96 and Asp97 each coordinate Mg(2+). Asp100 acts as the Proton acceptor in catalysis. Residues Lys128, 149–150 (FL), and Asp156 each bind GMP. Arg162 contacts diphosphate.

It belongs to the purine/pyrimidine phosphoribosyltransferase family. Mg(2+) serves as cofactor.

The protein resides in the cytoplasm. It catalyses the reaction IMP + diphosphate = hypoxanthine + 5-phospho-alpha-D-ribose 1-diphosphate. It carries out the reaction GMP + diphosphate = guanine + 5-phospho-alpha-D-ribose 1-diphosphate. Its pathway is purine metabolism; IMP biosynthesis via salvage pathway; IMP from hypoxanthine: step 1/1. The protein operates within purine metabolism; GMP biosynthesis via salvage pathway; GMP from guanine: step 1/1. Functionally, purine salvage pathway enzyme that catalyzes the transfer of the ribosyl-5-phosphate group from 5-phospho-alpha-D-ribose 1-diphosphate (PRPP) to the N9 position of the 6-oxopurines hypoxanthine and guanine to form the corresponding ribonucleotides IMP (inosine 5'-monophosphate) and GMP (guanosine 5'-monophosphate), with the release of PPi. The sequence is that of Hypoxanthine-guanine phosphoribosyltransferase (hpt) from Mycoplasma pneumoniae (strain ATCC 29342 / M129 / Subtype 1) (Mycoplasmoides pneumoniae).